We begin with the raw amino-acid sequence, 349 residues long: uncharacterized protein (349 aa).

The signal sequence occupies residues 1–25 (MNKYIKQGAPILGILLAVMFGGREG).

The protein belongs to the bacterial solute-binding protein 1 family. WtpA subfamily.

This is an uncharacterized protein from Methanococcus aeolicus (strain ATCC BAA-1280 / DSM 17508 / OCM 812 / Nankai-3).